The following is a 96-amino-acid chain: Protein Vpr (96 aa).

Positions 1–42 are homooligomerization; sequence MEQAPEDQGPQREPYNEWTLELLEELKNEAVRHFPRIWLHSL. 3 positions are modified to phosphoserine; by host: serine 79, serine 94, and serine 96.

This sequence belongs to the HIV-1 VPR protein family. As to quaternary structure, homooligomer, may form homodimer. Interacts with p6-gag region of the Pr55 Gag precursor protein through a (Leu-X-X)4 motif near the C-terminus of the P6gag protein. Interacts with host UNG. May interact with host RAD23A/HHR23A. Interacts with host VPRBP/DCAF1, leading to hijack the CUL4A-RBX1-DDB1-DCAF1/VPRBP complex, mediating ubiquitination of host proteins such as TERT and ZGPAT and arrest of the cell cycle in G2 phase. Post-translationally, phosphorylated on several residues by host. These phosphorylations regulate VPR activity for the nuclear import of the HIV-1 pre-integration complex.

Its subcellular location is the virion. The protein localises to the host nucleus. It is found in the host extracellular space. During virus replication, may deplete host UNG protein, and incude G2-M cell cycle arrest. Acts by targeting specific host proteins for degradation by the 26S proteasome, through association with the cellular CUL4A-DDB1 E3 ligase complex by direct interaction with host VPRPB/DCAF-1. Cell cycle arrest reportedly occurs within hours of infection and is not blocked by antiviral agents, suggesting that it is initiated by the VPR carried into the virion. Additionally, VPR induces apoptosis in a cell cycle dependent manner suggesting that these two effects are mechanistically linked. Detected in the serum and cerebrospinal fluid of AIDS patient, VPR may also induce cell death to bystander cells. In terms of biological role, during virus entry, plays a role in the transport of the viral pre-integration (PIC) complex to the host nucleus. This function is crucial for viral infection of non-dividing macrophages. May act directly at the nuclear pore complex, by binding nucleoporins phenylalanine-glycine (FG)-repeat regions. The sequence is that of Protein Vpr from Homo sapiens (Human).